A 455-amino-acid polypeptide reads, in one-letter code: Ribulose bisphosphate carboxylase large chain (455 aa).

Position 5 is an N6,N6,N6-trimethyllysine (lysine 5). The substrate site is built by asparagine 114 and threonine 164. The active-site Proton acceptor is lysine 166. Lysine 168 contacts substrate. Lysine 192, aspartate 194, and glutamate 195 together coordinate Mg(2+). At lysine 192 the chain carries N6-carboxylysine. The active-site Proton acceptor is the histidine 285. Arginine 286, histidine 318, and serine 370 together coordinate substrate.

Belongs to the RuBisCO large chain family. Type I subfamily. As to quaternary structure, heterohexadecamer of 8 large chains and 8 small chains; disulfide-linked. The disulfide link is formed within the large subunit homodimers. Mg(2+) serves as cofactor. Post-translationally, the disulfide bond which can form in the large chain dimeric partners within the hexadecamer appears to be associated with oxidative stress and protein turnover.

It is found in the plastid. It localises to the chloroplast. It carries out the reaction 2 (2R)-3-phosphoglycerate + 2 H(+) = D-ribulose 1,5-bisphosphate + CO2 + H2O. It catalyses the reaction D-ribulose 1,5-bisphosphate + O2 = 2-phosphoglycolate + (2R)-3-phosphoglycerate + 2 H(+). RuBisCO catalyzes two reactions: the carboxylation of D-ribulose 1,5-bisphosphate, the primary event in carbon dioxide fixation, as well as the oxidative fragmentation of the pentose substrate in the photorespiration process. Both reactions occur simultaneously and in competition at the same active site. The polypeptide is Ribulose bisphosphate carboxylase large chain (Vachellia farnesiana (Sweet acacia)).